Reading from the N-terminus, the 776-residue chain is 1,4-alpha-glucan branching enzyme GlgB (776 aa).

Asp431 functions as the Nucleophile in the catalytic mechanism. The active-site Proton donor is Glu484.

It belongs to the glycosyl hydrolase 13 family. GlgB subfamily. As to quaternary structure, monomer.

The catalysed reaction is Transfers a segment of a (1-&gt;4)-alpha-D-glucan chain to a primary hydroxy group in a similar glucan chain.. The protein operates within glycan biosynthesis; glycogen biosynthesis. Catalyzes the formation of the alpha-1,6-glucosidic linkages in glycogen by scission of a 1,4-alpha-linked oligosaccharide from growing alpha-1,4-glucan chains and the subsequent attachment of the oligosaccharide to the alpha-1,6 position. The protein is 1,4-alpha-glucan branching enzyme GlgB of Trichodesmium erythraeum (strain IMS101).